Reading from the N-terminus, the 210-residue chain is MSSAQNVKKSILAPVLDNNPIALQVLGVCSALAVTTKLETAFVMTLAVTFVTALSNFSVSLIRNHIPNSVRIIVQMAIIASLVIVVDQVLKAYLYDISKQLSVFVGLIITNCIVMGRAEAFAMKSAPVPSLIDGIGNGLGYGFVLITVGFFRELFGSGKLFGLEVLPLVSNGGWYQPNGLMLLAPSAFFLIGFLIWVIRILKPEQVEAKE.

The next 5 helical transmembrane spans lie at 42–62 (FVMT…VSLI), 72–92 (IIVQ…VLKA), 103–123 (VFVG…AFAM), 131–151 (LIDG…VGFF), and 178–198 (NGLM…IWVI).

This sequence belongs to the NqrDE/RnfAE family. As to quaternary structure, composed of six subunits; NqrA, NqrB, NqrC, NqrD, NqrE and NqrF.

The protein localises to the cell inner membrane. It carries out the reaction a ubiquinone + n Na(+)(in) + NADH + H(+) = a ubiquinol + n Na(+)(out) + NAD(+). This reaction is tightly coupled to the Na(+) pumping activity and specifically requires Na(+) for activity. Inhibited by korormicin and 2-N-heptyl-4-hydroxyquinoline N-oxide (HQNO). Its function is as follows. NQR complex catalyzes the reduction of ubiquinone-1 to ubiquinol by two successive reactions, coupled with the transport of Na(+) ions from the cytoplasm to the periplasm. NqrA to NqrE are probably involved in the second step, the conversion of ubisemiquinone to ubiquinol. The sequence is that of Na(+)-translocating NADH-quinone reductase subunit D from Vibrio alginolyticus.